A 186-amino-acid chain; its full sequence is Large ribosomal subunit protein uL22 (186 aa).

This sequence belongs to the universal ribosomal protein uL22 family. As to quaternary structure, component of the large ribosomal subunit (LSU). Mature N.crassa ribosomes consist of a small (40S) and a large (60S) subunit. The 40S small subunit contains 1 molecule of ribosomal RNA (18S rRNA) and at least 32 different proteins. The large 60S subunit contains 3 rRNA molecules (26S, 5.8S and 5S rRNA) and at least 42 different proteins.

The protein localises to the cytoplasm. In terms of biological role, component of the ribosome, a large ribonucleoprotein complex responsible for the synthesis of proteins in the cell. The small ribosomal subunit (SSU) binds messenger RNAs (mRNAs) and translates the encoded message by selecting cognate aminoacyl-transfer RNA (tRNA) molecules. The large subunit (LSU) contains the ribosomal catalytic site termed the peptidyl transferase center (PTC), which catalyzes the formation of peptide bonds, thereby polymerizing the amino acids delivered by tRNAs into a polypeptide chain. The nascent polypeptides leave the ribosome through a tunnel in the LSU and interact with protein factors that function in enzymatic processing, targeting, and the membrane insertion of nascent chains at the exit of the ribosomal tunnel. This Neurospora crassa (strain ATCC 24698 / 74-OR23-1A / CBS 708.71 / DSM 1257 / FGSC 987) protein is Large ribosomal subunit protein uL22 (rpl-17).